Consider the following 126-residue polypeptide: Fluoride-specific ion channel FluC (126 aa).

A run of 4 helical transmembrane segments spans residues 5–25 (ILVA…GAGV), 37–57 (VAIM…VVWA), 65–85 (LSPF…AFSL), and 101–121 (LYVA…LWVA). Na(+) contacts are provided by G75 and T78.

This sequence belongs to the fluoride channel Fluc/FEX (TC 1.A.43) family.

The protein localises to the cell inner membrane. The catalysed reaction is fluoride(in) = fluoride(out). Na(+) is not transported, but it plays an essential structural role and its presence is essential for fluoride channel function. Functionally, fluoride-specific ion channel. Important for reducing fluoride concentration in the cell, thus reducing its toxicity. The protein is Fluoride-specific ion channel FluC of Roseobacter denitrificans (strain ATCC 33942 / OCh 114) (Erythrobacter sp. (strain OCh 114)).